A 69-amino-acid polypeptide reads, in one-letter code: uncharacterized protein (69 aa).

Helical transmembrane passes span 15-35 (LIIGLLCVIGIVMLNGLICYV) and 36-56 (LYIIAVPSLLYGIGAFIIPKT).

The protein resides in the cell membrane. This is an uncharacterized protein from Methanocaldococcus jannaschii (strain ATCC 43067 / DSM 2661 / JAL-1 / JCM 10045 / NBRC 100440) (Methanococcus jannaschii).